Here is a 507-residue protein sequence, read N- to C-terminus: Protein MosB (507 aa).

Residues 256 to 275 constitute a DNA-binding region (H-T-H motif); it reads QAHGALYKGQHVGLLSDIGC. Lys-282 is modified (N6-(pyridoxal phosphate)lysine).

This sequence belongs to the DegT/DnrJ/EryC1 family.

In terms of biological role, involved in the biosynthesis of the rhizopine 3-O-methyl-scyllo-inosamine. May have a regulatory role in controlling the housekeeping genes within the nodule which are involved in the biosynthesis of the rhizopine backbone. This is Protein MosB (mosB) from Rhizobium meliloti (Ensifer meliloti).